The sequence spans 380 residues: uncharacterized protein (380 aa).

It belongs to the metallo-dependent hydrolases superfamily.

This is an uncharacterized protein from Methanocaldococcus jannaschii (strain ATCC 43067 / DSM 2661 / JAL-1 / JCM 10045 / NBRC 100440) (Methanococcus jannaschii).